Consider the following 347-residue polypeptide: 3,4-dihydroxy-2-butanone 4-phosphate synthase (347 aa).

Residues 1-200 (MPLNRVREAI…ISDLIEYRMQ (200 aa)) are DHBP synthase. Residues 27-28 (RE), Asp-32, 139-143 (RTGHT), and Glu-163 each bind D-ribulose 5-phosphate. Glu-28 lines the Mg(2+) pocket. His-142 is a Mg(2+) binding site. A GTP cyclohydrolase II-like region spans residues 201–347 (NEMLILIKER…IVLQGGPIQL (147 aa)).

This sequence in the N-terminal section; belongs to the DHBP synthase family. In the C-terminal section; belongs to the GTP cyclohydrolase II family. Mg(2+) serves as cofactor. Requires Mn(2+) as cofactor.

It carries out the reaction D-ribulose 5-phosphate = (2S)-2-hydroxy-3-oxobutyl phosphate + formate + H(+). Its pathway is cofactor biosynthesis; riboflavin biosynthesis; 2-hydroxy-3-oxobutyl phosphate from D-ribulose 5-phosphate: step 1/1. Catalyzes the conversion of D-ribulose 5-phosphate to formate and 3,4-dihydroxy-2-butanone 4-phosphate. In Wolinella succinogenes (strain ATCC 29543 / DSM 1740 / CCUG 13145 / JCM 31913 / LMG 7466 / NCTC 11488 / FDC 602W) (Vibrio succinogenes), this protein is 3,4-dihydroxy-2-butanone 4-phosphate synthase (ribB).